Reading from the N-terminus, the 536-residue chain is Protein ST7 homolog (536 aa).

2 helical membrane passes run 3–23 (CSWTFLWLLWIALVAVLLFAL) and 49–69 (FYVALTGTSSLVSGIILIFEW). Residues 191 to 218 (LAEEESETVSQAENLLRRALRAIESTLN) adopt a coiled-coil conformation. Residues 465 to 485 (TLMMLLQTFICLAICILAVLA) form a helical membrane-spanning segment.

Belongs to the ST7 family.

Its subcellular location is the membrane. This is Protein ST7 homolog from Caenorhabditis elegans.